A 116-amino-acid polypeptide reads, in one-letter code: Large ribosomal subunit protein bL20 (116 aa).

Belongs to the bacterial ribosomal protein bL20 family.

Functionally, binds directly to 23S ribosomal RNA and is necessary for the in vitro assembly process of the 50S ribosomal subunit. It is not involved in the protein synthesizing functions of that subunit. This chain is Large ribosomal subunit protein bL20, found in Helicobacter pylori (strain Shi470).